Consider the following 370-residue polypeptide: UDP-3-O-acylglucosamine N-acyltransferase (370 aa).

Catalysis depends on His252, which acts as the Proton acceptor. A disordered region spans residues 350-370 (AAGRQDGPAANAASSSAGDKA). Low complexity predominate over residues 358-370 (AANAASSSAGDKA).

It belongs to the transferase hexapeptide repeat family. LpxD subfamily. In terms of assembly, homotrimer.

The catalysed reaction is a UDP-3-O-[(3R)-3-hydroxyacyl]-alpha-D-glucosamine + a (3R)-hydroxyacyl-[ACP] = a UDP-2-N,3-O-bis[(3R)-3-hydroxyacyl]-alpha-D-glucosamine + holo-[ACP] + H(+). The protein operates within bacterial outer membrane biogenesis; LPS lipid A biosynthesis. Its function is as follows. Catalyzes the N-acylation of UDP-3-O-acylglucosamine using 3-hydroxyacyl-ACP as the acyl donor. Is involved in the biosynthesis of lipid A, a phosphorylated glycolipid that anchors the lipopolysaccharide to the outer membrane of the cell. The polypeptide is UDP-3-O-acylglucosamine N-acyltransferase (Paraburkholderia xenovorans (strain LB400)).